Reading from the N-terminus, the 2604-residue chain is BEACH domain-containing protein B (2604 aa).

A BEACH-type PH domain is found at 1761-1912; that stretch reads VGTSEVLTSV…NAKEVGMLIV (152 aa). The 291-residue stretch at 1936-2226 folds into the BEACH domain; sequence DRRIAMEMAE…QIFRKKHPRR (291 aa). 6 WD repeats span residues 2254–2293, 2368–2407, 2433–2474, 2476–2515, 2516–2557, and 2558–2596; these read HSPS…SGGN, HHKD…TPEK, GHDD…RSLK, PSGS…LASS, ESNG…KRYN, and GAGK…HRKP.

Functionally, may be involved in the suppression of BCHC1 activity. The sequence is that of BEACH domain-containing protein B from Arabidopsis thaliana (Mouse-ear cress).